The chain runs to 248 residues: uncharacterized protein (248 aa).

6 helical membrane-spanning segments follow: residues 65-85 (IIIYGVILQIYTTILFKQFLT), 105-125 (SITSFFYNGFCHVAVMIILWY), 126-146 (ISWTLIDYGTLVIAIMILGFI), 156-176 (LCCFIAIFTSIVHSTFFTLLI), 188-208 (LILNLTFLTITYILMILSDYS), and 222-242 (VIYIYCIQIIILQFIFIYKYT).

The protein resides in the cell membrane. This is an uncharacterized protein from Rickettsia prowazekii (strain Madrid E).